The primary structure comprises 365 residues: uncharacterized protein (365 aa).

Composition is skewed to basic and acidic residues over residues 1–27 (MDNV…EDHS) and 315–339 (AKDD…ETPK). Disordered stretches follow at residues 1–31 (MDNV…NSYQ) and 308–365 (KEEK…CLIS). Residues 340 to 353 (KASNTPRRNKSNTQ) show a composition bias toward polar residues.

The protein to yeast YGL082w. Interacts with sad1.

It is found in the cytoplasm. This is an uncharacterized protein from Schizosaccharomyces pombe (strain 972 / ATCC 24843) (Fission yeast).